A 215-amino-acid chain; its full sequence is Small ribosomal subunit protein uS7 (215 aa).

The protein belongs to the universal ribosomal protein uS7 family. In terms of assembly, part of the 30S ribosomal subunit.

In terms of biological role, one of the primary rRNA binding proteins, it binds directly to 16S rRNA where it nucleates assembly of the head domain of the 30S subunit. Is located at the subunit interface close to the decoding center. This is Small ribosomal subunit protein uS7 from Pyrococcus furiosus (strain ATCC 43587 / DSM 3638 / JCM 8422 / Vc1).